The chain runs to 544 residues: uncharacterized protein (544 aa).

The next 14 membrane-spanning stretches (helical) occupy residues 31–51, 52–72, 84–104, 116–136, 162–182, 191–211, 230–250, 257–277, 318–338, 356–376, 383–403, 407–427, 450–470, and 501–521; these read ILVF…AALA, GSVL…IGLL, LPWM…QWLI, WGLF…YTTV, FAFS…IAAG, FGEL…WSAL, LAPL…AKSF, GFDY…GFGF, FLFV…TASI, TIAL…QALA, VIYF…WLVQ, VALL…AYLI, FFYA…LFLV, and FAVA…AIFY.

It belongs to the sodium:galactoside symporter (TC 2.A.2) family.

Its subcellular location is the cell membrane. This is an uncharacterized protein from Synechocystis sp. (strain ATCC 27184 / PCC 6803 / Kazusa).